Here is a 496-residue protein sequence, read N- to C-terminus: Putative BTB/POZ domain and WD-repeat protein R61 (496 aa).

A BTB domain is found at 8-78; it reads SNINLILNDE…MFSDIDIYKN (71 aa). WD repeat units follow at residues 149–189, 208–248, 250–285, 291–330, 333–371, and 422–464; these read KFPR…FNSK, IFDN…KEFQ, DYKI…RKVL, KSIG…IIKW, VSKS…KILE, and MYFS…DIIY.

This sequence belongs to the mimivirus BTB/WD family.

The chain is Putative BTB/POZ domain and WD-repeat protein R61 from Acanthamoeba polyphaga (Amoeba).